We begin with the raw amino-acid sequence, 485 residues long: Glucagon receptor (485 aa).

A signal peptide spans 1-26 (MLLTQLHCPYLLLLLVVLSCLPKAPS). Over 27-137 (AQVMDFLFEK…EIEVQKGVAK (111 aa)) the chain is Extracellular. 3 disulfides stabilise this stretch: cysteine 44–cysteine 68, cysteine 59–cysteine 101, and cysteine 82–cysteine 122. N-linked (GlcNAc...) asparagine glycosylation is found at asparagine 47, asparagine 60, asparagine 75, and asparagine 79. Residues 138-162 (MYSSYQVMYTVGYSLSLGALLLALV) form a helical membrane-spanning segment. Topologically, residues 163–174 (ILLGLRKLHCTR) are cytoplasmic. A helical transmembrane segment spans residues 175–199 (NYIHGNLFASFVLKAGSVLVIDWLL). The Extracellular portion of the chain corresponds to 200–226 (KTRYSQKIGDDLSVSVWLSDGAVAGCR). A disulfide bond links cysteine 225 and cysteine 295. A helical transmembrane segment spans residues 227-250 (VATVIMQYGIIANYCWLLVEGVYL). The Cytoplasmic portion of the chain corresponds to 251–264 (YSLLSITTFSEKSF). Residues 265–286 (FSLYLCIGWGSPLLFVIPWVVV) form a helical membrane-spanning segment. At 287 to 304 (KCLFENVQCWTSNDNMGF) the chain is on the extracellular side. The helical transmembrane segment at 305 to 327 (WWILRIPVLLAILINFFIFVRII) threads the bilayer. Topologically, residues 328–351 (HLLVAKLRAHQMHYADYKFRLARS) are cytoplasmic. Positions 351–354 (STLT) are important for allosteric inhibitor binding. A helical membrane pass occupies residues 352–370 (TLTLIPLLGVHEVVFAFVT). At 371–382 (DEHAQGTLRSTK) the chain is on the extracellular side. A helical membrane pass occupies residues 383 to 403 (LFFDLFFSSFQGLLVAVLYCF). The Cytoplasmic segment spans residues 404-485 (LNKEVQAELL…SLPRLADSPT (82 aa)). The disordered stretch occupies residues 455 to 485 (MSAGSSSGTGCEPSAKTSLASSLPRLADSPT). Positions 456 to 475 (SAGSSSGTGCEPSAKTSLAS) are enriched in polar residues. Serine 460 and serine 476 each carry phosphoserine.

It belongs to the G-protein coupled receptor 2 family. Post-translationally, ligand-binding promotes phosphorylation of serine residues in the C-terminal cytoplasmic domain. Phosphorylation is important for receptor endocytosis after ligand-binding.

Its subcellular location is the cell membrane. G-protein coupled receptor for glucagon that plays a central role in the regulation of blood glucose levels and glucose homeostasis. Regulates the rate of hepatic glucose production by promoting glycogen hydrolysis and gluconeogenesis. Plays an important role in mediating the responses to fasting. Ligand binding causes a conformation change that triggers signaling via guanine nucleotide-binding proteins (G proteins) and modulates the activity of down-stream effectors, such as adenylate cyclase. Promotes activation of adenylate cyclase. Besides, plays a role in signaling via a phosphatidylinositol-calcium second messenger system. In Rattus norvegicus (Rat), this protein is Glucagon receptor (Gcgr).